A 334-amino-acid chain; its full sequence is ELMO domain-containing protein 1 (334 aa).

An ELMO domain is found at glutamine 133–leucine 314.

Functionally, acts as a GTPase-activating protein (GAP) toward guanine nucleotide exchange factors like ARL2, ARL3, ARF1 and ARF6, but not for GTPases outside the Arf family. This Homo sapiens (Human) protein is ELMO domain-containing protein 1 (ELMOD1).